The sequence spans 421 residues: RNase J-like protein (421 aa).

The Zn(2+) site is built by His-55, His-57, Asp-59, His-60, His-132, Asp-153, and His-389.

This sequence belongs to the metallo-beta-lactamase superfamily. RNA-metabolizing metallo-beta-lactamase-like family. As to quaternary structure, forms homodimers on heating to 60 degrees Celsius which may be the active form. Zn(2+) is required as a cofactor.

With respect to regulation, inhibited by imidazole. A 5'-3' exoribonuclease with a strong reference for 5'-monophosphorylated RNA and no endoribonuclease activty. The polypeptide is RNase J-like protein (Methanocaldococcus jannaschii (strain ATCC 43067 / DSM 2661 / JAL-1 / JCM 10045 / NBRC 100440) (Methanococcus jannaschii)).